The following is a 451-amino-acid chain: Chromosomal replication initiator protein DnaA (451 aa).

The interval 1 to 94 (MKPDLSSLWQ…KPEPKPAQPS (94 aa)) is domain I, interacts with DnaA modulators. Positions 87 to 106 (EPKPAQPSALPTHHNKEENK) are disordered. The tract at residues 95–113 (ALPTHHNKEENKPQTVIRS) is domain II. A domain III, AAA+ region region spans residues 114-331 (YLNPKHVFEN…GALNRVSANA (218 aa)). ATP contacts are provided by Gly159, Gly161, Lys162, and Thr163. The domain IV, binds dsDNA stretch occupies residues 332–451 (EFMGAAITID…WSNLIRTLSV (120 aa)).

Belongs to the DnaA family. In terms of assembly, oligomerizes as a right-handed, spiral filament on DNA at oriC.

Its subcellular location is the cytoplasm. Functionally, plays an essential role in the initiation and regulation of chromosomal replication. ATP-DnaA binds to the origin of replication (oriC) to initiate formation of the DNA replication initiation complex once per cell cycle. Binds the DnaA box (a 9 base pair repeat at the origin) and separates the double-stranded (ds)DNA. Forms a right-handed helical filament on oriC DNA; dsDNA binds to the exterior of the filament while single-stranded (ss)DNA is stabiized in the filament's interior. The ATP-DnaA-oriC complex binds and stabilizes one strand of the AT-rich DNA unwinding element (DUE), permitting loading of DNA polymerase. After initiation quickly degrades to an ADP-DnaA complex that is not apt for DNA replication. Binds acidic phospholipids. The chain is Chromosomal replication initiator protein DnaA from Pasteurella multocida (strain Pm70).